We begin with the raw amino-acid sequence, 104 residues long: UPF0235 protein Sfri_2863 (104 aa).

It belongs to the UPF0235 family.

The polypeptide is UPF0235 protein Sfri_2863 (Shewanella frigidimarina (strain NCIMB 400)).